A 453-amino-acid chain; its full sequence is Glutamyl-tRNA(Gln) amidotransferase subunit A (453 aa).

Active-site charge relay system residues include Lys-55 and Ser-130. Ser-154 serves as the catalytic Acyl-ester intermediate.

The protein belongs to the amidase family. GatA subfamily. In terms of assembly, heterotrimer of A, B and C subunits.

The enzyme catalyses L-glutamyl-tRNA(Gln) + L-glutamine + ATP + H2O = L-glutaminyl-tRNA(Gln) + L-glutamate + ADP + phosphate + H(+). Its function is as follows. Allows the formation of correctly charged Gln-tRNA(Gln) through the transamidation of misacylated Glu-tRNA(Gln) in organisms which lack glutaminyl-tRNA synthetase. The reaction takes place in the presence of glutamine and ATP through an activated gamma-phospho-Glu-tRNA(Gln). The polypeptide is Glutamyl-tRNA(Gln) amidotransferase subunit A (Aliarcobacter butzleri (strain RM4018) (Arcobacter butzleri)).